Reading from the N-terminus, the 427-residue chain is Serine hydroxymethyltransferase (427 aa).

(6S)-5,6,7,8-tetrahydrofolate is bound by residues Leu122 and 126–128; that span reads GHL. Lys231 bears the N6-(pyridoxal phosphate)lysine mark. (6S)-5,6,7,8-tetrahydrofolate contacts are provided by residues Glu247 and 355–357; that span reads SPF.

Belongs to the SHMT family. As to quaternary structure, homodimer. Pyridoxal 5'-phosphate is required as a cofactor.

It localises to the cytoplasm. It carries out the reaction (6R)-5,10-methylene-5,6,7,8-tetrahydrofolate + glycine + H2O = (6S)-5,6,7,8-tetrahydrofolate + L-serine. It participates in one-carbon metabolism; tetrahydrofolate interconversion. The protein operates within amino-acid biosynthesis; glycine biosynthesis; glycine from L-serine: step 1/1. Catalyzes the reversible interconversion of serine and glycine with tetrahydrofolate (THF) serving as the one-carbon carrier. This reaction serves as the major source of one-carbon groups required for the biosynthesis of purines, thymidylate, methionine, and other important biomolecules. Also exhibits THF-independent aldolase activity toward beta-hydroxyamino acids, producing glycine and aldehydes, via a retro-aldol mechanism. The chain is Serine hydroxymethyltransferase from Microcystis aeruginosa (strain NIES-843 / IAM M-2473).